The sequence spans 528 residues: Protein spinster homolog 1 (528 aa).

The tract at residues 1–38 (MAGSDTAPFLSQADDPDDGPAPGHPGLPGPMGNPKSGE) is disordered. At Ala2 the chain carries N-acetylalanine. Helical transmembrane passes span 60–80 (LIVV…FTVA), 98–118 (GLIQ…FGYL), 126–146 (YLMC…SFIP), 160–180 (VGVG…DLFV), 187–207 (MLSI…IAGS), 218–238 (WALR…FLVV), 278–298 (LGFT…PAFL), 323–343 (LIFG…GVEI), 357–377 (LVCA…LACA), 381–401 (IVAT…NWAI), 421–441 (FQIV…IGLI), and 465–485 (MLCA…AMFI). The residue at position 518 (Ser518) is a Phosphoserine.

This sequence belongs to the major facilitator superfamily. Spinster (TC 2.A.1.49) family. As to quaternary structure, interacts with BCL2 and BCL2L1. As to expression, expressed in liver (at mRNA and protein levels).

Its subcellular location is the lysosome membrane. It catalyses the reaction a 1-acyl-sn-glycero-3-phosphocholine(out) + H(+)(out) = a 1-acyl-sn-glycero-3-phosphocholine(in) + H(+)(in). It carries out the reaction 1-hexadecanoyl-sn-glycero-3-phosphocholine(out) + H(+)(out) = 1-hexadecanoyl-sn-glycero-3-phosphocholine(in) + H(+)(in). The catalysed reaction is 1-(9Z-octadecenoyl)-sn-glycero-3-phosphocholine(out) + H(+)(out) = 1-(9Z-octadecenoyl)-sn-glycero-3-phosphocholine(in) + H(+)(in). The enzyme catalyses 1-(5Z,8Z,11Z,14Z-eicosatetraenoyl)-sn-glycero-3-phosphocholine(out) + H(+)(out) = 1-(5Z,8Z,11Z,14Z-eicosatetraenoyl)-sn-glycero-3-phosphocholine(in) + H(+)(in). It catalyses the reaction 1-(4Z,7Z,10Z,13Z,16Z,19Z-docosahexaenoyl)-sn-glycero-3-phosphocholine(out) + H(+)(out) = 1-(4Z,7Z,10Z,13Z,16Z,19Z-docosahexaenoyl)-sn-glycero-3-phosphocholine(in) + H(+)(in). It carries out the reaction a 1-acyl-sn-glycero-3-phosphoethanolamine(out) + H(+)(out) = a 1-acyl-sn-glycero-3-phosphoethanolamine(in) + H(+)(in). The catalysed reaction is 1-(9Z-octadecenoyl)-sn-glycero-3-phosphoethanolamine(out) + H(+)(out) = 1-(9Z-octadecenoyl)-sn-glycero-3-phosphoethanolamine(in) + H(+)(in). The enzyme catalyses 1-acyl-sn-glycero-3-phospho-(1'-sn-glycerol)(out) + H(+)(out) = 1-acyl-sn-glycero-3-phospho-(1'-sn-glycerol)(in) + H(+)(in). It catalyses the reaction 1-(9Z-octadecenoyl)-sn-glycero-3-phospho-(1'-sn-glycerol)(out) + H(+)(out) = 1-(9Z-octadecenoyl)-sn-glycero-3-phospho-(1'-sn-glycerol)(in) + H(+)(in). It carries out the reaction a 1-O-(1Z-alkenyl)-sn-glycero-3-phosphocholine(out) + H(+)(out) = a 1-O-(1Z-alkenyl)-sn-glycero-3-phosphocholine(in) + H(+)(in). The catalysed reaction is 1-(1Z-hexadecenyl)-sn-glycero-3-phosphocholine(out) + H(+)(out) = 1-(1Z-hexadecenyl)-sn-glycero-3-phosphocholine(in) + H(+)(in). The enzyme catalyses a 1-O-(1Z-alkenyl)-sn-glycero-3-phosphoethanolamine(out) + H(+)(out) = a 1-O-(1Z-alkenyl)-sn-glycero-3-phosphoethanolamine(in) + H(+)(in). It catalyses the reaction 1-O-(1Z-hexadecenyl)-sn-glycero-3-phosphoethanolamine(out) + H(+)(out) = 1-O-(1Z-hexadecenyl)-sn-glycero-3-phosphoethanolamine(in) + H(+)(in). Its function is as follows. Plays a critical role in the phospholipid salvage pathway from lysosomes to the cytosol. Mediates the rate-limiting, proton-dependent, lysosomal efflux of lysophospholipids, which can then be reacylated by acyltransferases in the endoplasmic reticulum to form phospholipids. Selective for zwitterionic headgroups such as lysophosphatidylcholine (LPC) and lysophosphatidylethanolamine (LPE), can also transport lysophosphatidylglycerol (LPG), but not other anionic lysophospholipids, sphingosine, nor sphingomyelin. Transports lysophospholipids with saturated, monounsaturated, and polyunsaturated fatty acids, such as 1-hexadecanoyl-sn-glycero-3-phosphocholine, 1-(9Z-octadecenoyl)-sn-glycero-3-phosphocholine and 1-(4Z,7Z,10Z,13Z,16Z,19Z-docosahexaenoyl)-sn-glycero-3-phosphocholine, respectively. Can also transport lysoplasmalogen (LPC with a fatty alcohol) such as 1-(1Z-hexadecenyl)-sn-glycero-3-phosphocholine. Essential player in lysosomal homeostasis. Crucial for cell survival under conditions of nutrient limitation. May be involved in necrotic or autophagic cell death. The sequence is that of Protein spinster homolog 1 (Spns1) from Mus musculus (Mouse).